The primary structure comprises 289 residues: N-methyltransferase FrzE (289 aa).

This sequence belongs to the methyltransferase superfamily.

It carries out the reaction (1S,4S)-4-[(4-hydroxyphenyl)methyl]-2,5-diazaspiro[bicyclo[3.2.1]octane-6,1'-cyclohexan]-4'-one + S-adenosyl-L-methionine = (1S,4S)-4-[(4-hydroxyphenyl)methyl]-2-methyl-2,5-diazaspiro[bicyclo[3.2.1]octane-6,1'-cyclohexan]-4'-one + S-adenosyl-L-homocysteine + H(+). It catalyses the reaction (1S,4S)-4-[(4-methoxyphenyl)methyl]-2,5-diazaspiro[bicyclo[3.2.1]octane-6,1'-cyclohexan]-4'-one + S-adenosyl-L-methionine = (1S,4S)-4-[(4-methoxyphenyl)methyl]-2-methyl-2,5-diazaspiro[bicyclo[3.2.1]octane-6,1'-cyclohexan]-4'-one + S-adenosyl-L-homocysteine + H(+). It participates in secondary metabolite biosynthesis. N-methyltransferase; part of the gene cluster that mediates the biosynthesis of the alkaloid (-)-FR901483, a potent immunosuppressant that shows efficacy in animal models and a probable inhibitor of purine nucleotide biosynthesis by targeting phosphoribosylpyrophosphate amidotransferase (PPAT). Within the pathway, FrzE methylates the amine at position C10'. The biosynthesis of (-)-FR901483 starts with the condensation of two L-tyrosines to yield (S,S)-dityrosyl-piperazine. This process occurs in 3 steps with the non-canonical nonribosomal peptide synthetase FrzA catalyzing the reduction of L-tyrosine into L-tyrosinal, the spontaneous condensation of 2 L-tyrosinal units, and the subsequent reduction by the NmrA-like family domain-containing oxidoreductase FrzB. The cytochrome P450 monooxygenase FrzC then performs coupling between N10 and C1' to morph the piperazine into a 1,4-diazabicyclo[3.2.1]octane spiro-fused to a 2,5-cyclohexadienone. The dienone portion is further reduced to cyclohexanone by the flavin-dependent reductase FrzD. The methyltranserases (MTs) FrzE and FrzF are then involved in the methylation at the C10' amine and the C4 phenolic oxygen, respectively. The order of the two MTs appear to be interchangeable. Cleavage of the C9-N10' bond by the dioxygenase FrzG then leads to formation of a conjugated iminium. In addition to the oxidation of C9, an additional dehydrogenation between C7 and C8 can occur to give a likely shunt product. The next biosynthetic step is the intramolecular aldol condensation catalyzed by the newly identified aldolase FrzH to yield an aza-tricyclic product with the formation of a C9-C3' bond. The short-chain dehydrogenase/reductase FrzI then produces dephospho-(-)-FR901483 that is phosphorylated at C4'-OH into (-)-FR901483 by the phosphotransferase FrzJ. The sequence is that of N-methyltransferase FrzE from Cladobotryum sp.